We begin with the raw amino-acid sequence, 237 residues long: DNA repair protein RecO (237 aa).

Belongs to the RecO family.

Functionally, involved in DNA repair and RecF pathway recombination. This Rickettsia africae (strain ESF-5) protein is DNA repair protein RecO.